The following is a 152-amino-acid chain: 3-dehydroquinate dehydratase (152 aa).

Y26 acts as the Proton acceptor in catalysis. Substrate contacts are provided by N77, H83, and D90. Catalysis depends on H103, which acts as the Proton donor. Substrate contacts are provided by residues 104–105 and R114; that span reads LS.

The protein belongs to the type-II 3-dehydroquinase family. Homododecamer.

It carries out the reaction 3-dehydroquinate = 3-dehydroshikimate + H2O. Its pathway is metabolic intermediate biosynthesis; chorismate biosynthesis; chorismate from D-erythrose 4-phosphate and phosphoenolpyruvate: step 3/7. Its function is as follows. Catalyzes a trans-dehydration via an enolate intermediate. The protein is 3-dehydroquinate dehydratase of Tolumonas auensis (strain DSM 9187 / NBRC 110442 / TA 4).